A 298-amino-acid chain; its full sequence is Homoserine kinase (298 aa).

An ATP-binding site is contributed by 85 to 95 (PMGGLGSSAAS).

Belongs to the GHMP kinase family. Homoserine kinase subfamily.

It localises to the cytoplasm. It catalyses the reaction L-homoserine + ATP = O-phospho-L-homoserine + ADP + H(+). It participates in amino-acid biosynthesis; L-threonine biosynthesis; L-threonine from L-aspartate: step 4/5. In terms of biological role, catalyzes the ATP-dependent phosphorylation of L-homoserine to L-homoserine phosphate. This Methanopyrus kandleri (strain AV19 / DSM 6324 / JCM 9639 / NBRC 100938) protein is Homoserine kinase.